The following is a 286-amino-acid chain: MKHVLSIQSHVVYGYAGNKSATFPMQLLGVDVWALNTVQFSNHTQYGKWTGMVIPKEQIGEIVRGIDAIEALHLCDAIVSGYIGSAEQVEEIVNAVRFIKSKNPNALYLCDPVMGHPDKGCIVAEGVKEGLINLAMAEADLITPNLVELRELSGLPVENFAQAQDAVRAILAKGPKKVLVKHLSKVGKDSSQFEMLLATKDGMWHISRPLHQFRKEPVGVGDLTAGLFIANLLNGKSDIEAFEHTANAVNDVMTVTQQKDNYELQIIAAREYIMQPSSQYKAVKIA.

Substrate contacts are provided by residues Ser-9 and 44–45 (TQ). The ATP site is built by Asp-111, Glu-148, and Lys-181. Asp-222 is a substrate binding site.

This sequence belongs to the pyridoxine kinase family. PdxY subfamily. Homodimer. It depends on Mg(2+) as a cofactor.

The catalysed reaction is pyridoxal + ATP = pyridoxal 5'-phosphate + ADP + H(+). It functions in the pathway cofactor metabolism; pyridoxal 5'-phosphate salvage; pyridoxal 5'-phosphate from pyridoxal: step 1/1. Pyridoxal kinase involved in the salvage pathway of pyridoxal 5'-phosphate (PLP). Catalyzes the phosphorylation of pyridoxal to PLP. The chain is Pyridoxal kinase PdxY from Pasteurella multocida (strain Pm70).